The primary structure comprises 102 residues: ATP-dependent Clp protease adapter protein ClpS (102 aa).

The protein belongs to the ClpS family. As to quaternary structure, binds to the N-terminal domain of the chaperone ClpA.

Involved in the modulation of the specificity of the ClpAP-mediated ATP-dependent protein degradation. The protein is ATP-dependent Clp protease adapter protein ClpS of Wolinella succinogenes (strain ATCC 29543 / DSM 1740 / CCUG 13145 / JCM 31913 / LMG 7466 / NCTC 11488 / FDC 602W) (Vibrio succinogenes).